The primary structure comprises 378 residues: Mannitol-1-phosphate 5-dehydrogenase (378 aa).

Residue 4-15 (SVHFGAGNIGRG) coordinates NAD(+).

It belongs to the mannitol dehydrogenase family.

The enzyme catalyses D-mannitol 1-phosphate + NAD(+) = beta-D-fructose 6-phosphate + NADH + H(+). The sequence is that of Mannitol-1-phosphate 5-dehydrogenase from Streptococcus pneumoniae serotype 4 (strain ATCC BAA-334 / TIGR4).